The sequence spans 149 residues: Oligosaccharyltransferase complex subunit ostc-B (149 aa).

Residues 1-32 lie on the Cytoplasmic side of the membrane; the sequence is MESLYRIPFTVLECPNLKLKKPSWLHMPSAMT. A helical membrane pass occupies residues 33–53; that stretch reads VYAMVVVSYFLITGGIIYDVI. The Extracellular portion of the chain corresponds to 54 to 83; the sequence is VEPPSVGSMTDEHGHQRPVAFLAYRVNGQY. A helical transmembrane segment spans residues 84 to 104; it reads IMEGLASSFLFTMGGLGFIIL. Topologically, residues 105 to 117 are cytoplasmic; sequence DRSNAPNIPKLNR. A helical transmembrane segment spans residues 118-138; sequence FLLLFIGFVCVLLSFFMARVF. Over 139 to 149 the chain is Extracellular; sequence MRMKLPGYLMG.

The protein belongs to the OSTC family. Specific component of the STT3A-containing form of the oligosaccharyltransferase (OST) complex.

It is found in the membrane. It participates in protein modification; protein glycosylation. In terms of biological role, specific component of the STT3A-containing form of the oligosaccharyl transferase (OST) complex that catalyzes the initial transfer of a defined glycan (Glc(3)Man(9)GlcNAc(2) in eukaryotes) from the lipid carrier dolichol-pyrophosphate to an asparagine residue within an Asn-X-Ser/Thr consensus motif in nascent polypeptide chains, the first step in protein N-glycosylation. N-glycosylation occurs cotranslationally and the complex associates with the Sec61 complex at the channel-forming translocon complex that mediates protein translocation across the endoplasmic reticulum (ER). All subunits are required for a maximal enzyme activity. This is Oligosaccharyltransferase complex subunit ostc-B from Xenopus laevis (African clawed frog).